Consider the following 86-residue polypeptide: Small ribosomal subunit protein bS20 (86 aa).

This sequence belongs to the bacterial ribosomal protein bS20 family.

Functionally, binds directly to 16S ribosomal RNA. In Exiguobacterium sibiricum (strain DSM 17290 / CCUG 55495 / CIP 109462 / JCM 13490 / 255-15), this protein is Small ribosomal subunit protein bS20.